The chain runs to 428 residues: MNNLKLARFFATISKESKYVPNSGSYPLGYKVGAIHCGVKKNSTLDLAVLVSETPASAAAVFTTNKFKAAPVQVSRQILNDKNGKGISSIVVNSGNANAVTGKGGIEDALKMVDTVDSTLKNAPSSTLVMSTGVIGQRLPIDNILKGIPVALKDVGSSHEDWLRCAQGIMTTDTFPKLVSKSFEIDGRKYSLAGLAKGAGMICPNMATLLGFFVTDAPVTPGALSKILTYATDRSFNCISVDGDMSTNDTICAMANGAAGGEEISETSSQFSKIQDEITLFAQQLAQLVVRDGEGATKFITINVQDAQSYADAKKVASSIANSALFKTAMYGKDANWGRILCAVGYADADVNVLKTNVSFIPADGSAELKLLVNGEPEKVDEERASEILELEDLEIRISLGTGGGQEANFWTCDLSHEYVTINGDYRS.

Positions 171, 197, 208, 294, 423, and 428 each coordinate substrate. Catalysis depends on threonine 208, which acts as the Nucleophile.

It belongs to the ArgJ family. Heterodimer of an alpha and a beta chain. In terms of processing, the alpha and beta chains are autoproteolytically processed from a single precursor protein within the mitochondrion.

The protein resides in the mitochondrion matrix. It catalyses the reaction N(2)-acetyl-L-ornithine + L-glutamate = N-acetyl-L-glutamate + L-ornithine. The catalysed reaction is L-glutamate + acetyl-CoA = N-acetyl-L-glutamate + CoA + H(+). It functions in the pathway amino-acid biosynthesis; L-arginine biosynthesis; L-ornithine and N-acetyl-L-glutamate from L-glutamate and N(2)-acetyl-L-ornithine (cyclic): step 1/1. It participates in amino-acid biosynthesis; L-arginine biosynthesis; N(2)-acetyl-L-ornithine from L-glutamate: step 1/4. In terms of biological role, catalyzes two activities which are involved in the cyclic version of arginine biosynthesis: the synthesis of acetylglutamate from glutamate and acetyl-CoA, and of ornithine by transacetylation between acetylornithine and glutamate. The chain is Arginine biosynthesis bifunctional protein ArgJ, mitochondrial from Komagataella phaffii (strain GS115 / ATCC 20864) (Yeast).